The sequence spans 206 residues: Small ribosomal subunit protein uS4 (206 aa).

The segment at 18 to 46 (NIWGRPKSPVNRREYGPGQHGQRRKGKLS) is disordered. One can recognise an S4 RNA-binding domain in the interval 94 to 156 (RRLDAVVYRA…SKQNVAVLEA (63 aa)).

It belongs to the universal ribosomal protein uS4 family. As to quaternary structure, part of the 30S ribosomal subunit. Contacts protein S5. The interaction surface between S4 and S5 is involved in control of translational fidelity.

Its function is as follows. One of the primary rRNA binding proteins, it binds directly to 16S rRNA where it nucleates assembly of the body of the 30S subunit. With S5 and S12 plays an important role in translational accuracy. The polypeptide is Small ribosomal subunit protein uS4 (Ruegeria sp. (strain TM1040) (Silicibacter sp.)).